The following is a 61-amino-acid chain: Large ribosomal subunit protein eL20 (61 aa).

The protein belongs to the eukaryotic ribosomal protein eL20 family. As to quaternary structure, part of the 50S ribosomal subunit. Binds 23S rRNA.

This chain is Large ribosomal subunit protein eL20, found in Methanosarcina acetivorans (strain ATCC 35395 / DSM 2834 / JCM 12185 / C2A).